A 457-amino-acid chain; its full sequence is Siroheme synthase (457 aa).

The interval 1-204 (MDHLPIFCQL…NDQKAITETT (204 aa)) is precorrin-2 dehydrogenase /sirohydrochlorin ferrochelatase. NAD(+)-binding positions include 22–23 (DV) and 43–44 (LA). Ser128 is subject to Phosphoserine. The uroporphyrinogen-III C-methyltransferase stretch occupies residues 216-457 (GEVVLVGAGP…RDKLNWFSNH (242 aa)). S-adenosyl-L-methionine is bound at residue Pro225. Catalysis depends on Asp248, which acts as the Proton acceptor. Lys270 acts as the Proton donor in catalysis. S-adenosyl-L-methionine-binding positions include 301 to 303 (GGD), Ile306, 331 to 332 (TA), Met382, and Gly411.

It in the N-terminal section; belongs to the precorrin-2 dehydrogenase / sirohydrochlorin ferrochelatase family. The protein in the C-terminal section; belongs to the precorrin methyltransferase family.

The catalysed reaction is uroporphyrinogen III + 2 S-adenosyl-L-methionine = precorrin-2 + 2 S-adenosyl-L-homocysteine + H(+). It carries out the reaction precorrin-2 + NAD(+) = sirohydrochlorin + NADH + 2 H(+). The enzyme catalyses siroheme + 2 H(+) = sirohydrochlorin + Fe(2+). It functions in the pathway cofactor biosynthesis; adenosylcobalamin biosynthesis; precorrin-2 from uroporphyrinogen III: step 1/1. Its pathway is cofactor biosynthesis; adenosylcobalamin biosynthesis; sirohydrochlorin from precorrin-2: step 1/1. The protein operates within porphyrin-containing compound metabolism; siroheme biosynthesis; precorrin-2 from uroporphyrinogen III: step 1/1. It participates in porphyrin-containing compound metabolism; siroheme biosynthesis; siroheme from sirohydrochlorin: step 1/1. It functions in the pathway porphyrin-containing compound metabolism; siroheme biosynthesis; sirohydrochlorin from precorrin-2: step 1/1. Functionally, multifunctional enzyme that catalyzes the SAM-dependent methylations of uroporphyrinogen III at position C-2 and C-7 to form precorrin-2 via precorrin-1. Then it catalyzes the NAD-dependent ring dehydrogenation of precorrin-2 to yield sirohydrochlorin. Finally, it catalyzes the ferrochelation of sirohydrochlorin to yield siroheme. This chain is Siroheme synthase, found in Escherichia coli O8 (strain IAI1).